Consider the following 251-residue polypeptide: Capsid protein (251 aa).

The tract at residues 1–27 is disordered; that stretch reads MPKRDLPWRSMPGTSKTSRNANYSPRA. Residues 3-20 carry the Bipartite nuclear localization signal motif; the sequence is KRDLPWRSMPGTSKTSRN. Residues 12 to 23 show a composition bias toward polar residues; sequence PGTSKTSRNANY. A Nuclear localization signal motif is present at residues 35 to 49; the sequence is KASEWVHRPMYRKPR. The segment at 63 to 80 is a zinc-finger region; sequence CEGPCKVQSYEQRHDISH. Positions 96 to 117 match the Nuclear export signal motif; that stretch reads ITHRVGKRFCVKSVYILGKIWM. The Bipartite nuclear localization signal motif lies at 195-242; it reads KRFWKVNNHVVYNHQEAGKYENHTENALLLYMACTHASNPVYATLKIR.

It belongs to the geminiviridae capsid protein family. Homomultimer. Binds to single-stranded and double-stranded viral DNA. Interacts (via nuclear localization signals) with host importin alpha-1a.

It localises to the virion. The protein resides in the host nucleus. Encapsidates the viral DNA into characteristic twinned ('geminate') particles. Binds the genomic viral ssDNA and shuttles it into and out of the cell nucleus. The CP of bipartite geminiviruses is not required for cell-to-cell or systemic movement. The polypeptide is Capsid protein (Abutilon (Upland cotton)).